The sequence spans 168 residues: Type-2 ice-structuring protein (168 aa).

A signal peptide spans M1 to A17. Residues D18 to S34 constitute a propeptide that is removed on maturation. Cystine bridges form between C45–C56, C73–C163, C107–C138, C127–C149, and C139–C155. Residues H52–A164 enclose the C-type lectin domain.

It localises to the secreted. Functionally, has antifreeze activity to protect fish blood from freezing at subzero sea water temperatures. Binds to ice crystals and inhibits their growth. The thermal hysteresis (TH) activity, the ability to lower the blood freezing point, is approximately 0.45 degrees Celsius at 0.15 mM for this protein. The polypeptide is Type-2 ice-structuring protein (Brachyopsis segaliensis (Sea poacher)).